Reading from the N-terminus, the 701-residue chain is Transcriptional regulator Kaiso (701 aa).

Residues Cys-32 to Arg-94 enclose the BTB domain. 2 disordered regions span residues Gly-128–Pro-158 and Ser-181–His-311. The span at Thr-245 to Pro-258 shows a compositional bias: polar residues. Positions Thr-259 to Lys-273 are enriched in low complexity. Over residues Val-278–His-311 the composition is skewed to polar residues. The segment at Ala-470–Asn-609 is required for methylation dependent DNA-binding. C2H2-type zinc fingers lie at residues Tyr-501–His-523, Tyr-529–His-551, and Tyr-557–His-580. A required for sequence specific DNA-binding region spans residues His-519–Tyr-701. The interval Asp-644–Thr-664 is disordered. Polar residues predominate over residues Gln-652–Thr-664.

As to quaternary structure, self associates. Interacts with tcf7l1-A, leading to repression of tcf7l1-A target genes. Interacts with ctnnd1, and this interaction may inhibit DNA-binding. Interacts with ncor1.

It is found in the nucleus. Transcriptional regulator with bimodal DNA-binding specificity. Binds to methylated CpG dinucleotides in the consensus sequence 5'-CGCG-3' and also binds to the non-methylated consensus sequence 5'-CTGCNA-3'. May recruit the N-CoR repressor complex to promote histone deacetylation and the formation of repressive chromatin structures in target gene promoters. Contributes to the repression of target genes of the Wnt signaling pathway and to the methylation-dependent repression of zygotic transcription prior to the mid-blastula transition (MBT). Also required for gastrulation movements. This Xenopus laevis (African clawed frog) protein is Transcriptional regulator Kaiso (zbtb33).